Consider the following 222-residue polypeptide: Superoxide dismutase [Mn], mitochondrial (222 aa).

The transit peptide at 1–24 (MLSRAVCGTGRQLAPALGYLGSRQ) directs the protein to the mitochondrion. H50 lines the Mn(2+) pocket. Y58 is modified (3'-nitrotyrosine). An N6-acetyllysine; alternate mark is found at K68 and K75. K68 and K75 each carry N6-succinyllysine; alternate. H98 serves as a coordination point for Mn(2+). N6-acetyllysine is present on K114. Residues K122 and K130 each carry the N6-acetyllysine; alternate modification. Residues K122 and K130 each carry the N6-succinyllysine; alternate modification. Mn(2+)-binding residues include D183 and H187. N6-acetyllysine is present on K202.

Belongs to the iron/manganese superoxide dismutase family. As to quaternary structure, homotetramer. It depends on Mn(2+) as a cofactor. Nitrated under oxidative stress. Nitration coupled with oxidation inhibits the catalytic activity. In terms of processing, acetylation at Lys-122 decreases enzymatic activity. Deacetylated by SIRT3 upon exposure to ionizing radiations or after long fasting. Post-translationally, polyubiquitinated; leading to proteasomal degradation. Deubiquitinated by USP36 which increases protein stability.

Its subcellular location is the mitochondrion matrix. The catalysed reaction is 2 superoxide + 2 H(+) = H2O2 + O2. In terms of biological role, destroys superoxide anion radicals which are normally produced within the cells and which are toxic to biological systems. The protein is Superoxide dismutase [Mn], mitochondrial (SOD2) of Macaca nemestrina (Pig-tailed macaque).